A 220-amino-acid polypeptide reads, in one-letter code: Thiamine-phosphate synthase (220 aa).

Residues 47-51 (QYREK) and Asn-78 contribute to the 4-amino-2-methyl-5-(diphosphooxymethyl)pyrimidine site. The Mg(2+) site is built by Asp-79 and Asp-98. Ser-117 contributes to the 4-amino-2-methyl-5-(diphosphooxymethyl)pyrimidine binding site. 143-145 (TAT) contributes to the 2-[(2R,5Z)-2-carboxy-4-methylthiazol-5(2H)-ylidene]ethyl phosphate binding site. 4-amino-2-methyl-5-(diphosphooxymethyl)pyrimidine is bound at residue Lys-146. Residues Gly-174 and 194–195 (IS) contribute to the 2-[(2R,5Z)-2-carboxy-4-methylthiazol-5(2H)-ylidene]ethyl phosphate site.

This sequence belongs to the thiamine-phosphate synthase family. Requires Mg(2+) as cofactor.

It catalyses the reaction 2-[(2R,5Z)-2-carboxy-4-methylthiazol-5(2H)-ylidene]ethyl phosphate + 4-amino-2-methyl-5-(diphosphooxymethyl)pyrimidine + 2 H(+) = thiamine phosphate + CO2 + diphosphate. It carries out the reaction 2-(2-carboxy-4-methylthiazol-5-yl)ethyl phosphate + 4-amino-2-methyl-5-(diphosphooxymethyl)pyrimidine + 2 H(+) = thiamine phosphate + CO2 + diphosphate. The enzyme catalyses 4-methyl-5-(2-phosphooxyethyl)-thiazole + 4-amino-2-methyl-5-(diphosphooxymethyl)pyrimidine + H(+) = thiamine phosphate + diphosphate. Its pathway is cofactor biosynthesis; thiamine diphosphate biosynthesis; thiamine phosphate from 4-amino-2-methyl-5-diphosphomethylpyrimidine and 4-methyl-5-(2-phosphoethyl)-thiazole: step 1/1. Functionally, condenses 4-methyl-5-(beta-hydroxyethyl)thiazole monophosphate (THZ-P) and 2-methyl-4-amino-5-hydroxymethyl pyrimidine pyrophosphate (HMP-PP) to form thiamine monophosphate (TMP). This is Thiamine-phosphate synthase from Methanosarcina barkeri (strain Fusaro / DSM 804).